Here is an 89-residue protein sequence, read N- to C-terminus: Small ribosomal subunit protein uS15 (89 aa).

The segment at Met-1–Ala-25 is disordered. Over residues Lys-8–Ala-25 the composition is skewed to polar residues.

Belongs to the universal ribosomal protein uS15 family. In terms of assembly, part of the 30S ribosomal subunit. Forms a bridge to the 50S subunit in the 70S ribosome, contacting the 23S rRNA.

In terms of biological role, one of the primary rRNA binding proteins, it binds directly to 16S rRNA where it helps nucleate assembly of the platform of the 30S subunit by binding and bridging several RNA helices of the 16S rRNA. Functionally, forms an intersubunit bridge (bridge B4) with the 23S rRNA of the 50S subunit in the ribosome. This is Small ribosomal subunit protein uS15 from Synechococcus sp. (strain CC9902).